A 258-amino-acid chain; its full sequence is Imidazole glycerol phosphate synthase subunit HisF (258 aa).

Residues Asp11 and Asp130 contribute to the active site.

Belongs to the HisA/HisF family. As to quaternary structure, heterodimer of HisH and HisF.

Its subcellular location is the cytoplasm. The enzyme catalyses 5-[(5-phospho-1-deoxy-D-ribulos-1-ylimino)methylamino]-1-(5-phospho-beta-D-ribosyl)imidazole-4-carboxamide + L-glutamine = D-erythro-1-(imidazol-4-yl)glycerol 3-phosphate + 5-amino-1-(5-phospho-beta-D-ribosyl)imidazole-4-carboxamide + L-glutamate + H(+). It participates in amino-acid biosynthesis; L-histidine biosynthesis; L-histidine from 5-phospho-alpha-D-ribose 1-diphosphate: step 5/9. Its function is as follows. IGPS catalyzes the conversion of PRFAR and glutamine to IGP, AICAR and glutamate. The HisF subunit catalyzes the cyclization activity that produces IGP and AICAR from PRFAR using the ammonia provided by the HisH subunit. The chain is Imidazole glycerol phosphate synthase subunit HisF from Baumannia cicadellinicola subsp. Homalodisca coagulata.